We begin with the raw amino-acid sequence, 513 residues long: Probable DNA primase large subunit (513 aa).

[4Fe-4S] cluster contacts are provided by cysteine 315, cysteine 398, cysteine 415, and cysteine 457.

Belongs to the eukaryotic-type primase large subunit family. As to quaternary structure, heterodimer of a small subunit and a large subunit. [4Fe-4S] cluster is required as a cofactor.

Functionally, DNA primase is the polymerase that synthesizes small RNA primers for the Okazaki fragments made during discontinuous DNA replication. The polypeptide is Probable DNA primase large subunit (Neurospora crassa (strain ATCC 24698 / 74-OR23-1A / CBS 708.71 / DSM 1257 / FGSC 987)).